The following is a 238-amino-acid chain: Small ribosomal subunit protein uS2 (238 aa).

This sequence belongs to the universal ribosomal protein uS2 family.

The protein is Small ribosomal subunit protein uS2 of Moorella thermoacetica (strain ATCC 39073 / JCM 9320).